The chain runs to 130 residues: Small ribosomal subunit protein uS11 (130 aa).

This sequence belongs to the universal ribosomal protein uS11 family. As to quaternary structure, part of the 30S ribosomal subunit. Interacts with proteins S7 and S18. Binds to IF-3.

In terms of biological role, located on the platform of the 30S subunit, it bridges several disparate RNA helices of the 16S rRNA. Forms part of the Shine-Dalgarno cleft in the 70S ribosome. This is Small ribosomal subunit protein uS11 from Syntrophus aciditrophicus (strain SB).